The primary structure comprises 123 residues: Large ribosomal subunit protein uL29 (123 aa).

Lys-19 carries the post-translational modification N6-acetyllysine. Lys-25 participates in a covalent cross-link: Glycyl lysine isopeptide (Lys-Gly) (interchain with G-Cter in SUMO2). At Ser-29 the chain carries Phosphoserine. N6-acetyllysine is present on Lys-43. Positions 95–114 (LNKHEENLKTKKQQRKERLY) are disordered.

Belongs to the universal ribosomal protein uL29 family. As to quaternary structure, component of the large ribosomal subunit.

It localises to the cytoplasm. Functionally, component of the large ribosomal subunit. The ribosome is a large ribonucleoprotein complex responsible for the synthesis of proteins in the cell. This is Large ribosomal subunit protein uL29 (RPL35) from Bos taurus (Bovine).